The primary structure comprises 432 residues: D-amino acid dehydrogenase (432 aa).

3 to 17 (VVILGSGVVGVASAW) serves as a coordination point for FAD.

It belongs to the DadA oxidoreductase family. The cofactor is FAD.

It carries out the reaction a D-alpha-amino acid + A + H2O = a 2-oxocarboxylate + AH2 + NH4(+). The protein operates within amino-acid degradation; D-alanine degradation; NH(3) and pyruvate from D-alanine: step 1/1. Oxidative deamination of D-amino acids. The protein is D-amino acid dehydrogenase of Shigella dysenteriae serotype 1 (strain Sd197).